A 1550-amino-acid polypeptide reads, in one-letter code: Cellulose synthase 1 (1550 aa).

A catalytic region spans residues 1–741 (MPEVRSSTQS…KERVLKGTVK (741 aa)). The next 3 membrane-spanning stretches (helical) occupy residues 26–46 (GAGL…TSVT), 47–67 (LPPE…FIVG), and 106–126 (GLLG…LFLS). The tract at residues 147–240 (EWPTVDIFVP…YILIFDCDHV (94 aa)) is catalytic subdomain A. The active site involves Asp-189. Residues Asp-236 and Asp-238 each coordinate substrate. Residues 317–377 (TAIEQIGGFA…GQRVRWARGM (61 aa)) form a catalytic subdomain B region. Residue Asp-333 is part of the active site. 5 helical membrane-spanning segments follow: residues 398-418 (LCYL…IFLS), 423-443 (FLFF…AYAI), 468-488 (VYET…LLSP), 507-527 (FDLG…GGLA), and 547-567 (LLNS…IAVG). Positions 572-647 (QKRNSHRIPA…PARIIRAGNG (76 aa)) constitute a PilZ domain. 2 disordered regions span residues 708–731 (VHRS…NPSR) and 768–813 (APAH…QPLA). The segment at 742 to 1550 (MVSLLALLTF…KQLEDERRKS (809 aa)) is cyclic di-GMP binding domain. Over residues 768–796 (APAHQPEASDLPPLPALLPATSGAAQAGS) the composition is skewed to low complexity. The helical transmembrane segment at 1513–1533 (VLLVGLLGCILIVSVLARALA) threads the bilayer.

The protein in the N-terminal section; belongs to the glycosyltransferase 2 family. It in the C-terminal section; belongs to the AcsB/BcsB family. Mg(2+) is required as a cofactor.

The protein localises to the cell inner membrane. It carries out the reaction [(1-&gt;4)-beta-D-glucosyl](n) + UDP-alpha-D-glucose = [(1-&gt;4)-beta-D-glucosyl](n+1) + UDP + H(+). It participates in glycan metabolism; bacterial cellulose biosynthesis. Functionally, bifunctional protein comprised of a catalytic subunit and a regulatory subunit. The catalytic subunit of cellulose synthase polymerizes uridine 5'-diphosphate glucose to cellulose in a processive way. The thick cellulosic mats generated by this enzyme probably provide a specialized protective environment to the bacterium. The regulatory subunit binds bis-(3'-5') cyclic diguanylic acid (c-di-GMP). The polypeptide is Cellulose synthase 1 (acsAB) (Novacetimonas hansenii (Komagataeibacter hansenii)).